Consider the following 702-residue polypeptide: Putative methyltransferase NSUN7 (702 aa).

Catalysis depends on Cys424, which acts as the Nucleophile. Disordered stretches follow at residues 522–541, 567–593, and 675–702; these read KSSK…TKAA, ETVT…KHKL, and PTPS…RRWL. A compositionally biased stretch (basic residues) spans 523-534; the sequence is SSKREKKKKKSK. A compositionally biased stretch (polar residues) spans 567–587; sequence ETVTKPSLPQKNTAQVGASSQ. Residues 681–691 show a composition bias toward basic and acidic residues; that stretch reads RKGEKPKDDTR.

The protein belongs to the class I-like SAM-binding methyltransferase superfamily. RsmB/NOP family.

Functionally, may have S-adenosyl-L-methionine-dependent methyl-transferase activity. The chain is Putative methyltransferase NSUN7 (NSUN7) from Macaca fascicularis (Crab-eating macaque).